The primary structure comprises 309 residues: Putative HTH-type transcriptional regulatory protein AF_1787 (309 aa).

An HTH cro/C1-type domain is found at 131–185 (IREARERLGLSVGDMAKMLGVSRRTVKKYEEGTDTTLSTAAKIEEIIGTFAIKEI). Positions 142–161 (VGDMAKMLGVSRRTVKKYEE) form a DNA-binding region, H-T-H motif.

The protein is Putative HTH-type transcriptional regulatory protein AF_1787 of Archaeoglobus fulgidus (strain ATCC 49558 / DSM 4304 / JCM 9628 / NBRC 100126 / VC-16).